A 206-amino-acid polypeptide reads, in one-letter code: Inner membrane-spanning protein YciB (206 aa).

5 helical membrane passes run 50 to 70, 78 to 98, 105 to 125, 150 to 170, and 173 to 193; these read PILLATAIAIIATILQIGYLL, GTLWLSLAIIVFFGGATIYFH, WKPTVLYWCFAAALLFSQIFL, LSWVAFFITMGLLNLYVAFNF, and AAWVNFKLFGGMGLMFAFIII.

It belongs to the YciB family.

Its subcellular location is the cell inner membrane. Plays a role in cell envelope biogenesis, maintenance of cell envelope integrity and membrane homeostasis. The chain is Inner membrane-spanning protein YciB from Herminiimonas arsenicoxydans.